The following is a 501-amino-acid chain: Aldehyde dehydrogenase 1A1 (501 aa).

Position 2 is an N-acetylserine (S2). 2 positions are modified to N6-acetyllysine: K91 and K128. Residues 167-170 (IPWN), 193-196 (KPAE), 226-227 (GP), and 246-247 (GS) each bind NAD(+). K252 carries the post-translational modification N6-acetyllysine. E269 serves as the catalytic Proton acceptor. Residue 269-271 (ELG) coordinates NAD(+). C303 serves as the catalytic Nucleophile. Residues 336–501 (LNSGINQGPQ…VAIKISQKNS (166 aa)) form a mediates interaction with PRMT3 region. 349 to 353 (EQHDK) is a binding site for NAD(+). Residues K353 and K367 each carry the N6-acetyllysine modification. Residue 400–402 (EIF) participates in NAD(+) binding. K410 is subject to N6-acetyllysine. A Phosphoserine modification is found at S413. N6-acetyllysine occurs at positions 419, 435, and 495.

Belongs to the aldehyde dehydrogenase family. As to quaternary structure, homotetramer. Interacts with PRMT3; the interaction is direct, inhibits ALDH1A1 aldehyde dehydrogenase activity and is independent of the methyltransferase activity of PRMT3. Post-translationally, the N-terminus is blocked most probably by acetylation.

Its subcellular location is the cytoplasm. It localises to the cytosol. The protein resides in the cell projection. The protein localises to the axon. It catalyses the reaction an aldehyde + NAD(+) + H2O = a carboxylate + NADH + 2 H(+). It carries out the reaction all-trans-retinal + NAD(+) + H2O = all-trans-retinoate + NADH + 2 H(+). The catalysed reaction is 9-cis-retinal + NAD(+) + H2O = 9-cis-retinoate + NADH + 2 H(+). The enzyme catalyses 11-cis-retinal + NAD(+) + H2O = 11-cis-retinoate + NADH + 2 H(+). It catalyses the reaction 13-cis-retinal + NAD(+) + H2O = 13-cis-retinoate + NADH + 2 H(+). It carries out the reaction 3-deoxyglucosone + NAD(+) + H2O = 2-dehydro-3-deoxy-D-gluconate + NADH + 2 H(+). The catalysed reaction is (E)-4-hydroxynon-2-enal + NAD(+) + H2O = (E)-4-hydroxynon-2-enoate + NADH + 2 H(+). The enzyme catalyses malonaldehyde + NAD(+) + H2O = 3-oxopropanoate + NADH + 2 H(+). It catalyses the reaction hexanal + NAD(+) + H2O = hexanoate + NADH + 2 H(+). It carries out the reaction propanal + NAD(+) + H2O = propanoate + NADH + 2 H(+). The catalysed reaction is acetaldehyde + NAD(+) + H2O = acetate + NADH + 2 H(+). The enzyme catalyses benzaldehyde + NAD(+) + H2O = benzoate + NADH + 2 H(+). It catalyses the reaction 4-aminobutanal + NAD(+) + H2O = 4-aminobutanoate + NADH + 2 H(+). It participates in cofactor metabolism; retinol metabolism. In terms of biological role, cytosolic dehydrogenase that catalyzes the irreversible oxidation of a wide range of aldehydes to their corresponding carboxylic acid. Functions downstream of retinol dehydrogenases and catalyzes the oxidation of retinaldehyde into retinoic acid, the second step in the oxidation of retinol/vitamin A into retinoic acid. This pathway is crucial to control the levels of retinol and retinoic acid, two important molecules which excess can be teratogenic and cytotoxic. Also oxidizes aldehydes resulting from lipid peroxidation like (E)-4-hydroxynon-2-enal/HNE, malonaldehyde and hexanal that form protein adducts and are highly cytotoxic. By participating for instance to the clearance of (E)-4-hydroxynon-2-enal/HNE in the lens epithelium prevents the formation of HNE-protein adducts and lens opacification. Also functions downstream of fructosamine-3-kinase in the fructosamine degradation pathway by catalyzing the oxidation of 3-deoxyglucosone, the carbohydrate product of fructosamine 3-phosphate decomposition, which is itself a potent glycating agent that may react with lysine and arginine side-chains of proteins. Also has an aminobutyraldehyde dehydrogenase activity and is probably part of an alternative pathway for the biosynthesis of GABA/4-aminobutanoate in midbrain, thereby playing a role in GABAergic synaptic transmission. The chain is Aldehyde dehydrogenase 1A1 from Mesocricetus auratus (Golden hamster).